The primary structure comprises 234 residues: Small ribosomal subunit protein uS10m (234 aa).

The N-terminal 23 residues, 1–23 (MLRIGYRGFSTRSRVFKLSPQEY), are a transit peptide targeting the mitochondrion.

The protein belongs to the universal ribosomal protein uS10 family. In terms of assembly, component of the mitochondrial small ribosomal subunit (mt-SSU).

It is found in the mitochondrion. In terms of biological role, component of the mitochondrial ribosome (mitoribosome), a dedicated translation machinery responsible for the synthesis of mitochondrial genome-encoded proteins, including at least some of the essential transmembrane subunits of the mitochondrial respiratory chain. The mitoribosomes are attached to the mitochondrial inner membrane and translation products are cotranslationally integrated into the membrane. The polypeptide is Small ribosomal subunit protein uS10m (RSM10) (Candida albicans (strain SC5314 / ATCC MYA-2876) (Yeast)).